The following is a 327-amino-acid chain: Methionyl-tRNA formyltransferase (327 aa).

Ser-121 to Pro-124 is a (6S)-5,6,7,8-tetrahydrofolate binding site.

This sequence belongs to the Fmt family.

It carries out the reaction L-methionyl-tRNA(fMet) + (6R)-10-formyltetrahydrofolate = N-formyl-L-methionyl-tRNA(fMet) + (6S)-5,6,7,8-tetrahydrofolate + H(+). Functionally, attaches a formyl group to the free amino group of methionyl-tRNA(fMet). The formyl group appears to play a dual role in the initiator identity of N-formylmethionyl-tRNA by promoting its recognition by IF2 and preventing the misappropriation of this tRNA by the elongation apparatus. The sequence is that of Methionyl-tRNA formyltransferase from Paraburkholderia phymatum (strain DSM 17167 / CIP 108236 / LMG 21445 / STM815) (Burkholderia phymatum).